We begin with the raw amino-acid sequence, 2059 residues long: Desmoplakin-A (2059 aa).

Polar residues predominate over residues 1-11 (MSLSGSQTRLH). The tract at residues 1–25 (MSLSGSQTRLHQISRRSSSRPDLTA) is disordered. 2 coiled-coil regions span residues 320–354 (IPQK…LLKN) and 397–453 (FKEA…VQTL). Residues 665–690 (EVSSGKTATGVSSGKTATGVSSGKTS) are disordered. Low complexity predominate over residues 671–690 (TATGVSSGKTATGVSSGKTS). 2 coiled-coil regions span residues 1062–1229 (MEEL…AELE) and 1261–1383 (LQQD…LQQR). 6 Plectin repeats span residues 1450–1488 (YLGG…TLEL), 1489–1526 (LEAQ…KDKL), 1564–1602 (LLEA…NEIL), 1666–1694 (IVDP…FLEL), 1847–1885 (LLEA…SVKL), and 1923–1961 (FLEF…AQKL). The tract at residues 2008-2059 (KGISSPYNVSSGPSSRSGSRAGSRTGSRSGSRRGSVDYSSSSVSYTFFSSAS) is disordered. A compositionally biased stretch (low complexity) spans 2011 to 2059 (SSPYNVSSGPSSRSGSRAGSRTGSRSGSRRGSVDYSSSSVSYTFFSSAS).

Belongs to the plakin or cytolinker family.

It is found in the cell junction. The protein localises to the desmosome. The protein resides in the cell membrane. Functionally, involved in the organization of desmosome cell-cell junctions. Of particular importance in cell adhesion in the skin and during cardiac development. May also play a role in the regulation of Wnt, TGF-beta and Hippo signaling pathways. The polypeptide is Desmoplakin-A (Danio rerio (Zebrafish)).